The following is a 262-amino-acid chain: 3-methyl-2-oxobutanoate hydroxymethyltransferase (262 aa).

Residues aspartate 44 and aspartate 83 each coordinate Mg(2+). 3-methyl-2-oxobutanoate is bound by residues 44–45, aspartate 83, and lysine 112; that span reads DS. Glutamate 114 contacts Mg(2+). Glutamate 181 serves as the catalytic Proton acceptor.

Belongs to the PanB family. In terms of assembly, homodecamer; pentamer of dimers. The cofactor is Mg(2+).

Its subcellular location is the cytoplasm. It catalyses the reaction 3-methyl-2-oxobutanoate + (6R)-5,10-methylene-5,6,7,8-tetrahydrofolate + H2O = 2-dehydropantoate + (6S)-5,6,7,8-tetrahydrofolate. It functions in the pathway cofactor biosynthesis; (R)-pantothenate biosynthesis; (R)-pantoate from 3-methyl-2-oxobutanoate: step 1/2. Its function is as follows. Catalyzes the reversible reaction in which hydroxymethyl group from 5,10-methylenetetrahydrofolate is transferred onto alpha-ketoisovalerate to form ketopantoate. This Thiobacillus denitrificans (strain ATCC 25259 / T1) protein is 3-methyl-2-oxobutanoate hydroxymethyltransferase.